A 124-amino-acid chain; its full sequence is PEP-dependent dihydroxyacetone kinase 1, phosphoryl donor subunit DhaM (124 aa).

The PTS EIIA type-4 domain occupies Pro-4 to Lys-124. His-12 functions as the Tele-phosphohistidine intermediate in the catalytic mechanism.

This sequence belongs to the PEP-utilizing enzyme family. As to quaternary structure, homodimer. The dihydroxyacetone kinase complex is composed of a homodimer of DhaM, a homodimer of DhaK and the subunit DhaL.

It localises to the cytoplasm. It catalyses the reaction dihydroxyacetone + phosphoenolpyruvate = dihydroxyacetone phosphate + pyruvate. In terms of biological role, component of the dihydroxyacetone kinase complex, which is responsible for the phosphoenolpyruvate (PEP)-dependent phosphorylation of dihydroxyacetone. DhaM serves as the phosphoryl donor. Is phosphorylated by phosphoenolpyruvate in an EI- and HPr-dependent reaction, and a phosphorelay system on histidine residues finally leads to phosphoryl transfer to DhaL and dihydroxyacetone. In Listeria innocua serovar 6a (strain ATCC BAA-680 / CLIP 11262), this protein is PEP-dependent dihydroxyacetone kinase 1, phosphoryl donor subunit DhaM.